Here is a 207-residue protein sequence, read N- to C-terminus: Thiamine-phosphate synthase (207 aa).

4-amino-2-methyl-5-(diphosphooxymethyl)pyrimidine-binding positions include 37-41 (QYRHK) and asparagine 69. Mg(2+)-binding residues include aspartate 70 and aspartate 89. Residues serine 108 and lysine 138 each contribute to the 4-amino-2-methyl-5-(diphosphooxymethyl)pyrimidine site. 2-[(2R,5Z)-2-carboxy-4-methylthiazol-5(2H)-ylidene]ethyl phosphate contacts are provided by residues glycine 165 and 185-186 (IS).

This sequence belongs to the thiamine-phosphate synthase family. Requires Mg(2+) as cofactor.

It carries out the reaction 2-[(2R,5Z)-2-carboxy-4-methylthiazol-5(2H)-ylidene]ethyl phosphate + 4-amino-2-methyl-5-(diphosphooxymethyl)pyrimidine + 2 H(+) = thiamine phosphate + CO2 + diphosphate. It catalyses the reaction 2-(2-carboxy-4-methylthiazol-5-yl)ethyl phosphate + 4-amino-2-methyl-5-(diphosphooxymethyl)pyrimidine + 2 H(+) = thiamine phosphate + CO2 + diphosphate. The enzyme catalyses 4-methyl-5-(2-phosphooxyethyl)-thiazole + 4-amino-2-methyl-5-(diphosphooxymethyl)pyrimidine + H(+) = thiamine phosphate + diphosphate. Its pathway is cofactor biosynthesis; thiamine diphosphate biosynthesis; thiamine phosphate from 4-amino-2-methyl-5-diphosphomethylpyrimidine and 4-methyl-5-(2-phosphoethyl)-thiazole: step 1/1. Functionally, condenses 4-methyl-5-(beta-hydroxyethyl)thiazole monophosphate (THZ-P) and 2-methyl-4-amino-5-hydroxymethyl pyrimidine pyrophosphate (HMP-PP) to form thiamine monophosphate (TMP). The sequence is that of Thiamine-phosphate synthase from Janthinobacterium sp. (strain Marseille) (Minibacterium massiliensis).